An 86-amino-acid polypeptide reads, in one-letter code: UPF0291 protein LBA1279 (86 aa).

Composition is skewed to basic and acidic residues over residues 1-27 and 65-75; these read MNKD…KENE and NGKEVTSEKAK. 2 disordered regions span residues 1 to 36 and 65 to 86; these read MNKD…EEEE and NGKE…LRKD. Positions 76–86 are enriched in basic residues; that stretch reads QAQRKKGLRKD.

This sequence belongs to the UPF0291 family.

The protein resides in the cytoplasm. The protein is UPF0291 protein LBA1279 of Lactobacillus acidophilus (strain ATCC 700396 / NCK56 / N2 / NCFM).